A 23-amino-acid polypeptide reads, in one-letter code: Septenin 2d (23 aa).

As to expression, expressed in skin glands.

The protein localises to the secreted. Functionally, may act as an antimicrobial peptide. The sequence is that of Septenin 2d from Osteopilus septentrionalis (Cuban treefrog).